We begin with the raw amino-acid sequence, 627 residues long: 1-deoxy-D-xylulose-5-phosphate synthase (627 aa).

Residues histidine 74 and 115–117 (GHA) each bind thiamine diphosphate. Aspartate 146 is a Mg(2+) binding site. Residues 147 to 148 (AA), asparagine 175, phenylalanine 284, and glutamate 364 contribute to the thiamine diphosphate site. Mg(2+) is bound at residue asparagine 175.

Belongs to the transketolase family. DXPS subfamily. Homodimer. The cofactor is Mg(2+). Thiamine diphosphate is required as a cofactor.

The catalysed reaction is D-glyceraldehyde 3-phosphate + pyruvate + H(+) = 1-deoxy-D-xylulose 5-phosphate + CO2. It functions in the pathway metabolic intermediate biosynthesis; 1-deoxy-D-xylulose 5-phosphate biosynthesis; 1-deoxy-D-xylulose 5-phosphate from D-glyceraldehyde 3-phosphate and pyruvate: step 1/1. In terms of biological role, catalyzes the acyloin condensation reaction between C atoms 2 and 3 of pyruvate and glyceraldehyde 3-phosphate to yield 1-deoxy-D-xylulose-5-phosphate (DXP). The protein is 1-deoxy-D-xylulose-5-phosphate synthase of Acidobacterium capsulatum (strain ATCC 51196 / DSM 11244 / BCRC 80197 / JCM 7670 / NBRC 15755 / NCIMB 13165 / 161).